The following is a 63-amino-acid chain: Large ribosomal subunit protein bL28 (63 aa).

This sequence belongs to the bacterial ribosomal protein bL28 family.

The protein is Large ribosomal subunit protein bL28 of Clostridium novyi (strain NT).